Here is a 93-residue protein sequence, read N- to C-terminus: UPF0298 protein GWCH70_0997 (93 aa).

Belongs to the UPF0298 family.

It localises to the cytoplasm. This chain is UPF0298 protein GWCH70_0997, found in Geobacillus sp. (strain WCH70).